Reading from the N-terminus, the 98-residue chain is NADH-ubiquinone oxidoreductase chain 4L (98 aa).

3 helical membrane-spanning segments follow: residues 1-21 (MSLT…GLLM), 29-49 (ALLC…ITIL), and 61-81 (IILL…LVMV).

The protein belongs to the complex I subunit 4L family. In terms of assembly, core subunit of respiratory chain NADH dehydrogenase (Complex I) which is composed of 45 different subunits.

It localises to the mitochondrion inner membrane. It carries out the reaction a ubiquinone + NADH + 5 H(+)(in) = a ubiquinol + NAD(+) + 4 H(+)(out). Functionally, core subunit of the mitochondrial membrane respiratory chain NADH dehydrogenase (Complex I) which catalyzes electron transfer from NADH through the respiratory chain, using ubiquinone as an electron acceptor. Part of the enzyme membrane arm which is embedded in the lipid bilayer and involved in proton translocation. This is NADH-ubiquinone oxidoreductase chain 4L (MT-ND4L) from Rhinophylla pumilio (Dwarf little fruit bat).